Reading from the N-terminus, the 107-residue chain is Regulatory protein SoxS (107 aa).

Positions 8-106 (QDLIAWIDEH…DRTPSDYRHR (99 aa)) constitute an HTH araC/xylS-type domain. 2 DNA-binding regions (H-T-H motif) span residues 25–46 (DVVAKKSGYSKWYLQRMFRTVT) and 73–96 (IFDIAMDLGYVSQQTFSRVFRRQF).

It localises to the cytoplasm. Its function is as follows. Transcriptional activator of the superoxide response regulon of E.coli that includes at least 10 genes such as sodA, nfo, zwf and micF. Binds the DNA sequence 5'-GCACN(7)CAA-3'. It also facilitates the subsequent binding of RNA polymerase to the micF and the nfo promoters. The polypeptide is Regulatory protein SoxS (soxS) (Escherichia coli O157:H7).